Reading from the N-terminus, the 907-residue chain is DNA ligase 4 (907 aa).

The ATP site is built by Glu273, Lys275, Arg280, Glu333, Phe378, Glu438, Lys443, Lys460, and Lys462. Lys275 serves as the catalytic N6-AMP-lysine intermediate. Glu333 lines the Mg(2+) pocket. Glu438 contacts Mg(2+). BRCT domains follow at residues Pro655–Ile754 and Val800–Cys906.

Belongs to the ATP-dependent DNA ligase family. The cofactor is Mg(2+).

The protein resides in the nucleus. The catalysed reaction is ATP + (deoxyribonucleotide)n-3'-hydroxyl + 5'-phospho-(deoxyribonucleotide)m = (deoxyribonucleotide)n+m + AMP + diphosphate.. Its function is as follows. DNA ligase involved in DNA non-homologous end joining (NHEJ); required for double-strand break (DSB) repair. This is DNA ligase 4 (LIG4) from Kluyveromyces lactis (strain ATCC 8585 / CBS 2359 / DSM 70799 / NBRC 1267 / NRRL Y-1140 / WM37) (Yeast).